The chain runs to 207 residues: MLILSGQGNPGAKYAKNRHNAGFLVIDRIHDAYGFGPWRTKFDAEISEGTVETANGRQRVLLIKPQTFYNETGRSVSKAVTFYKLQPEDVTVFHDEIDLAPGRLRVKRGGGHSGNNGARSMMAHLGENFRRIRIGVGHPGDKAMVMPHVLSDFHKVDLEWFEPMTEAVCKALPFLLAGDDERFQTEVMRLAPAPKHDPKQTARKGEA.

Tyr-14 lines the tRNA pocket. His-19 serves as the catalytic Proton acceptor. 3 residues coordinate tRNA: Phe-68, Asn-70, and Asn-116.

The protein belongs to the PTH family. Monomer.

The protein resides in the cytoplasm. The enzyme catalyses an N-acyl-L-alpha-aminoacyl-tRNA + H2O = an N-acyl-L-amino acid + a tRNA + H(+). Hydrolyzes ribosome-free peptidyl-tRNAs (with 1 or more amino acids incorporated), which drop off the ribosome during protein synthesis, or as a result of ribosome stalling. Functionally, catalyzes the release of premature peptidyl moieties from peptidyl-tRNA molecules trapped in stalled 50S ribosomal subunits, and thus maintains levels of free tRNAs and 50S ribosomes. The chain is Peptidyl-tRNA hydrolase from Hyphomonas neptunium (strain ATCC 15444).